The following is a 409-amino-acid chain: MFDTSAGSVRPAECTGDGRVGLYVCGITPYDATHIGHASTYLAFDTLQRVWLDRGYDVAYVQNVTDVDDPLLERATATGVDWRDLAAEQVELFRTDMEALRILPPDSYVGVTEVVDEVASAVAELVRRGTAYPVATPDAVVAGAQDLYFDVARAGEDGPWALGDESGYDLDTMAALSAERGGDPERPGKRDPLDPLLWRAERAGEPAWDSVVGRGRPGWHIECAVIALRKLDRPVTVQGGGSDLIFPHHEMSAGHAAALTGEDFACVYAHSGMVAYQGEKMSKSLGNLVLVSRLRAAGVDPRAIRLALLAQHYRADWEWTDELLAESVARLAAWDAWAAAADASATAGADAGEPGELVQLVRERLSEDLDTPGAILLLDLRVATGVPATPVELAAVDALLGVRLGSPAA.

Position 25 (C25) interacts with Zn(2+). L-cysteinyl-5'-AMP contacts are provided by residues 25–28 (CGIT), T40, and 63–65 (NVT). A 'HIGH' region motif is present at residues 27–37 (ITPYDATHIGH). The 'ERGGDP' region signature appears at 179-184 (ERGGDP). W219 serves as a coordination point for L-cysteinyl-5'-AMP. C223 contacts Zn(2+). Residue 241–243 (GSD) coordinates L-cysteinyl-5'-AMP. Residue H248 participates in Zn(2+) binding. An L-cysteinyl-5'-AMP-binding site is contributed by V274. Positions 280-284 (KMSKS) match the 'KMSKS' region motif.

The protein belongs to the class-I aminoacyl-tRNA synthetase family. MshC subfamily. As to quaternary structure, monomer. Zn(2+) is required as a cofactor.

The enzyme catalyses 1D-myo-inositol 2-amino-2-deoxy-alpha-D-glucopyranoside + L-cysteine + ATP = 1D-myo-inositol 2-(L-cysteinylamino)-2-deoxy-alpha-D-glucopyranoside + AMP + diphosphate + H(+). Functionally, catalyzes the ATP-dependent condensation of GlcN-Ins and L-cysteine to form L-Cys-GlcN-Ins. This is L-cysteine:1D-myo-inositol 2-amino-2-deoxy-alpha-D-glucopyranoside ligase from Clavibacter sepedonicus (Clavibacter michiganensis subsp. sepedonicus).